The sequence spans 454 residues: tRNA modification GTPase MnmE (454 aa).

Residues arginine 23, glutamate 80, and lysine 120 each coordinate (6S)-5-formyl-5,6,7,8-tetrahydrofolate. Positions 216-377 (GMKVVIAGRP…LRNHLKQSMG (162 aa)) constitute a TrmE-type G domain. Residue asparagine 226 participates in K(+) binding. GTP is bound by residues 226-231 (NAGKSS), 245-251 (TDIAGTT), 270-273 (DTAG), 335-338 (NKAD), and 358-360 (SAR). Position 230 (serine 230) interacts with Mg(2+). K(+)-binding residues include threonine 245, isoleucine 247, and threonine 250. Threonine 251 contacts Mg(2+). Lysine 454 provides a ligand contact to (6S)-5-formyl-5,6,7,8-tetrahydrofolate.

This sequence belongs to the TRAFAC class TrmE-Era-EngA-EngB-Septin-like GTPase superfamily. TrmE GTPase family. Homodimer. Heterotetramer of two MnmE and two MnmG subunits. The cofactor is K(+).

It is found in the cytoplasm. Exhibits a very high intrinsic GTPase hydrolysis rate. Involved in the addition of a carboxymethylaminomethyl (cmnm) group at the wobble position (U34) of certain tRNAs, forming tRNA-cmnm(5)s(2)U34. The chain is tRNA modification GTPase MnmE from Enterobacter sp. (strain 638).